Here is a 339-residue protein sequence, read N- to C-terminus: Olfactory receptor 7E24 (339 aa).

Residues 1-43 (MSYFPILFFFFLKRCPSYTEPQNLTGVSEFLLLGLSEDPELQP) are Extracellular-facing. N23 carries an N-linked (GlcNAc...) asparagine glycan. A helical transmembrane segment spans residues 44 to 64 (VLAGLFLSMYLVTVLGNLLII). The Cytoplasmic portion of the chain corresponds to 65-72 (LAVSSDSH). The helical transmembrane segment at 73-93 (LHTPMYFFLSNLSLADIGFTS) threads the bilayer. Residues 94-117 (TTVPKMIVDMQTHSRVISYEGCLT) lie on the Extracellular side of the membrane. C115 and C207 form a disulfide bridge. The helical transmembrane segment at 118 to 138 (QMSFFVLFACMDDMLLSVMAY) threads the bilayer. At 139–157 (DRFVAICHPLHYRIIMNPR) the chain is on the cytoplasmic side. The chain crosses the membrane as a helical span at residues 158 to 178 (LCGFLILLSFFISLLDSQLHN). Residues 179-215 (LIMLQLTCFKDVDISNFFCDPSQLLHLRCSDTFINEM) lie on the Extracellular side of the membrane. A helical membrane pass occupies residues 216-235 (VIYFMGAIFGCLPISGILFS). The Cytoplasmic portion of the chain corresponds to 236–255 (YYKIVSPILRVPTSDGKYKA). The chain crosses the membrane as a helical span at residues 256–276 (FSTCGSHLAVVCLFYGTGLVG). Residues 277 to 289 (YLSSAVLPSPRKS) lie on the Extracellular side of the membrane. A helical membrane pass occupies residues 290–310 (MVASVMYTVVTPMLNPFIYSL). The Cytoplasmic segment spans residues 311–339 (RNKDIQSALCRLHGRIIKSHHLHPFCYMG).

Belongs to the G-protein coupled receptor 1 family.

Its subcellular location is the cell membrane. Odorant receptor. This chain is Olfactory receptor 7E24 (OR7E24), found in Homo sapiens (Human).